Reading from the N-terminus, the 309-residue chain is Taste receptor type 2 member 124 (309 aa).

Residues Met1–Ser7 are Extracellular-facing. The chain crosses the membrane as a helical span at residues Ile8–Val28. Residues Leu29–Gln46 lie on the Cytoplasmic side of the membrane. Residues Ile47–Val67 traverse the membrane as a helical segment. Residues Lys68–Lys81 are Extracellular-facing. Residues Met82–Ser102 form a helical membrane-spanning segment. Residues Thr103–Leu127 lie on the Cytoplasmic side of the membrane. The helical transmembrane segment at Ile128 to Ile148 threads the bilayer. Topologically, residues Thr149 to Thr182 are extracellular. N-linked (GlcNAc...) asparagine glycosylation is found at Asn160 and Asn180. The chain crosses the membrane as a helical span at residues Ile183–Leu203. Residues Trp204–Asn227 are Cytoplasmic-facing. Residues Ala228 to Ile248 form a helical membrane-spanning segment. The Extracellular segment spans residues Ser249–His261. N-linked (GlcNAc...) asparagine glycosylation occurs at Asn255. The helical transmembrane segment at Ile262–Gly282 threads the bilayer. Topologically, residues Asn283–Thr309 are cytoplasmic.

Belongs to the G-protein coupled receptor T2R family.

The protein resides in the membrane. Its function is as follows. Putative taste receptor which may play a role in the perception of bitterness. This is Taste receptor type 2 member 124 from Rattus norvegicus (Rat).